Reading from the N-terminus, the 439-residue chain is MPSRKKLHLISLGCTKNLVDSEVMLGRLKEYEITDDNTEADVIIVNTCGFIDAAKEESINTVLNLHDERKEDSILVMSGCLSERYKEELQQDMPEIDIFTGVGDYEKIDELIASKQSTFSPEVYLATETSGRVITGSNYHAYIKIAEGCNQACSFCAIPSFKGKLHSRSLSSIEKEVRMLAEQGYYDFSFISQDSSSYGRDMDLKDGLIDLIKVVEAIEGVRSARILYLYPSTTTFELIDTIADSKIFQTYYDMPIQHIDDAVLKTMKRGFGEQKTIELLEHMKSKPNAFLRTSVIAGHPGESQRSFEKLCSFMEEFGFDRFNTFHYSNEETTTAYQMEQIPQDIINERAEILGEIAERSTLRSLEKMVGKTVELVIDGESDEHEYLLSARPLQWAVDIDGEILINDTSDLPVKYGKVYEAKVTELVGMQLLATLIKEC.

Positions 5-117 (KKLHLISLGC…IDELIASKQS (113 aa)) constitute an MTTase N-terminal domain. [4Fe-4S] cluster contacts are provided by Cys-14, Cys-48, Cys-80, Cys-149, Cys-153, and Cys-156. The Radical SAM core domain occupies 135–363 (TGSNYHAYIK…GEIAERSTLR (229 aa)). Residues 366-437 (EKMVGKTVEL…GMQLLATLIK (72 aa)) enclose the TRAM domain.

This sequence belongs to the methylthiotransferase family. RimO subfamily. It depends on [4Fe-4S] cluster as a cofactor.

It is found in the cytoplasm. It carries out the reaction L-aspartate(89)-[ribosomal protein uS12]-hydrogen + (sulfur carrier)-SH + AH2 + 2 S-adenosyl-L-methionine = 3-methylsulfanyl-L-aspartate(89)-[ribosomal protein uS12]-hydrogen + (sulfur carrier)-H + 5'-deoxyadenosine + L-methionine + A + S-adenosyl-L-homocysteine + 2 H(+). Its function is as follows. Catalyzes the methylthiolation of an aspartic acid residue of ribosomal protein uS12. The polypeptide is Ribosomal protein uS12 methylthiotransferase RimO (Sulfurovum sp. (strain NBC37-1)).